The following is a 261-amino-acid chain: Transmembrane protein 106A (261 aa).

The helical transmembrane segment at 95–115 (VFLAVSICLVTSSLIIFFLFP) threads the bilayer.

The protein belongs to the TMEM106 family.

It is found in the cell membrane. In terms of biological role, activates macrophages and polarizes them into M1-like macrophages through the activation of the MAPK and NF-kappaB signaling pathway. Upon activation, up-regulates the expression of CD80, CD86, CD69 and MHC II on macrophages, and induces the release of pro-inflammatory cytokines such as TNF, IL1B, IL6, CCL2 and nitric oxide. May play a role in inhibition of proliferation and migration. This is Transmembrane protein 106A (TMEM106A) from Bos taurus (Bovine).